Here is a 132-residue protein sequence, read N- to C-terminus: Small ribosomal subunit protein uS8 (132 aa).

The protein belongs to the universal ribosomal protein uS8 family. Part of the 30S ribosomal subunit. Contacts proteins S5 and S12.

In terms of biological role, one of the primary rRNA binding proteins, it binds directly to 16S rRNA central domain where it helps coordinate assembly of the platform of the 30S subunit. The sequence is that of Small ribosomal subunit protein uS8 from Clostridium botulinum (strain Alaska E43 / Type E3).